The following is a 526-amino-acid chain: Probable feruloyl esterase B (526 aa).

A signal peptide spans 1 to 18; the sequence is MARLSLLTLLALGSAALA. 2 disulfides stabilise this stretch: Cys-27–Cys-74 and Cys-62–Cys-113. The N-linked (GlcNAc...) asparagine glycan is linked to Asn-137. 4 cysteine pairs are disulfide-bonded: Cys-186-Cys-441, Cys-255-Cys-272, Cys-281-Cys-291, and Cys-503-Cys-525. Ser-187 acts as the Acyl-ester intermediate in catalysis. Asn-233 is a glycosylation site (N-linked (GlcNAc...) asparagine). Positions 256, 259, 261, 263, and 265 each coordinate Ca(2+). An N-linked (GlcNAc...) asparagine glycan is attached at Asn-311. Residues Asp-400 and His-440 each act as charge relay system in the active site. An N-linked (GlcNAc...) asparagine glycan is attached at Asn-516.

This sequence belongs to the tannase family.

It is found in the secreted. The catalysed reaction is feruloyl-polysaccharide + H2O = ferulate + polysaccharide.. Functionally, involved in degradation of plant cell walls. Hydrolyzes the feruloyl-arabinose ester bond in arabinoxylans as well as the feruloyl-galactose and feruloyl-arabinose ester bonds in pectin. The sequence is that of Probable feruloyl esterase B (faeB) from Aspergillus clavatus (strain ATCC 1007 / CBS 513.65 / DSM 816 / NCTC 3887 / NRRL 1 / QM 1276 / 107).